The primary structure comprises 227 residues: Pro-thyrotropin-releasing hormone-A (227 aa).

Positions 1–15 (MVSVWWLLLLGTTVS) are cleaved as a signal peptide. Glutamine 75 is subject to Pyrrolidone carboxylic acid. Position 77 is a proline amide (proline 77). At glutamine 89 the chain carries Pyrrolidone carboxylic acid. Proline 91 is subject to Proline amide. Glutamine 107 carries the pyrrolidone carboxylic acid modification. Disordered stretches follow at residues 107–128 (QHPG…KREE) and 151–204 (RRQH…PCEG). Residue proline 109 is modified to Proline amide. Residues 112 to 128 (RFVDDVEKRQHPGKREE) show a composition bias toward basic and acidic residues. At glutamine 121 the chain carries Pyrrolidone carboxylic acid. Proline 123 is subject to Proline amide. Glutamine 153 bears the Pyrrolidone carboxylic acid mark. A Proline amide modification is found at proline 155. Position 168 is a pyrrolidone carboxylic acid (glutamine 168). Position 170 is a proline amide (proline 170). A compositionally biased stretch (basic and acidic residues) spans 184–201 (ENSKEVGKRQHPGKRYDP). Glutamine 193 carries the post-translational modification Pyrrolidone carboxylic acid. Proline 195 is modified (proline amide).

This sequence belongs to the TRH family.

Its subcellular location is the secreted. In Xenopus laevis (African clawed frog), this protein is Pro-thyrotropin-releasing hormone-A (trh-a).